The sequence spans 499 residues: Bifunctional purine biosynthesis protein PurH (499 aa).

The 144-residue stretch at 1–144 (MINRALISVY…KNFKDVIVVT (144 aa)) folds into the MGS-like domain.

It belongs to the PurH family.

The catalysed reaction is (6R)-10-formyltetrahydrofolate + 5-amino-1-(5-phospho-beta-D-ribosyl)imidazole-4-carboxamide = 5-formamido-1-(5-phospho-D-ribosyl)imidazole-4-carboxamide + (6S)-5,6,7,8-tetrahydrofolate. The enzyme catalyses IMP + H2O = 5-formamido-1-(5-phospho-D-ribosyl)imidazole-4-carboxamide. Its pathway is purine metabolism; IMP biosynthesis via de novo pathway; 5-formamido-1-(5-phospho-D-ribosyl)imidazole-4-carboxamide from 5-amino-1-(5-phospho-D-ribosyl)imidazole-4-carboxamide (10-formyl THF route): step 1/1. It functions in the pathway purine metabolism; IMP biosynthesis via de novo pathway; IMP from 5-formamido-1-(5-phospho-D-ribosyl)imidazole-4-carboxamide: step 1/1. This chain is Bifunctional purine biosynthesis protein PurH, found in Clostridium kluyveri (strain NBRC 12016).